A 356-amino-acid polypeptide reads, in one-letter code: Arginine kinase Scy s 2 (356 aa).

The region spanning Lys9–Lys91 is the Phosphagen kinase N-terminal domain. Gly64–Tyr68 lines the L-arginine pocket. In terms of domain architecture, Phosphagen kinase C-terminal spans Phe119–Met356. ATP is bound by residues Ser122 to Arg126 and His185. Position 225 (Glu225) interacts with L-arginine. Arg229 is a binding site for ATP. Cys271 contacts L-arginine. ATP is bound by residues Arg280–His284 and Arg309–Glu314. Glu314 contacts L-arginine.

This sequence belongs to the ATP:guanido phosphotransferase family. Muscle (at protein level).

The catalysed reaction is L-arginine + ATP = N(omega)-phospho-L-arginine + ADP + H(+). In terms of biological role, catalyzes the reversible transfer of high energy ATP gamma-phosphate group to L-arginine. This chain is Arginine kinase Scy s 2, found in Scylla serrata (Mud crab).